A 351-amino-acid polypeptide reads, in one-letter code: Histidinol-phosphate aminotransferase (351 aa).

At Lys-213 the chain carries N6-(pyridoxal phosphate)lysine.

It belongs to the class-II pyridoxal-phosphate-dependent aminotransferase family. Histidinol-phosphate aminotransferase subfamily. Homodimer. The cofactor is pyridoxal 5'-phosphate.

It catalyses the reaction L-histidinol phosphate + 2-oxoglutarate = 3-(imidazol-4-yl)-2-oxopropyl phosphate + L-glutamate. It participates in amino-acid biosynthesis; L-histidine biosynthesis; L-histidine from 5-phospho-alpha-D-ribose 1-diphosphate: step 7/9. This chain is Histidinol-phosphate aminotransferase, found in Thermoanaerobacter pseudethanolicus (strain ATCC 33223 / 39E) (Clostridium thermohydrosulfuricum).